The following is a 317-amino-acid chain: 4-hydroxy-3-methylbut-2-enyl diphosphate reductase (317 aa).

Cys12 lines the [4Fe-4S] cluster pocket. Positions 41 and 74 each coordinate (2E)-4-hydroxy-3-methylbut-2-enyl diphosphate. Residues His41 and His74 each contribute to the dimethylallyl diphosphate site. Residues His41 and His74 each coordinate isopentenyl diphosphate. Residue Cys96 coordinates [4Fe-4S] cluster. His124 provides a ligand contact to (2E)-4-hydroxy-3-methylbut-2-enyl diphosphate. His124 is a binding site for dimethylallyl diphosphate. His124 contributes to the isopentenyl diphosphate binding site. Glu126 serves as the catalytic Proton donor. Thr169 provides a ligand contact to (2E)-4-hydroxy-3-methylbut-2-enyl diphosphate. Cys199 provides a ligand contact to [4Fe-4S] cluster. Positions 227, 228, 229, and 271 each coordinate (2E)-4-hydroxy-3-methylbut-2-enyl diphosphate. Residues Ser227, Ser228, Asn229, and Ser271 each coordinate dimethylallyl diphosphate. The isopentenyl diphosphate site is built by Ser227, Ser228, Asn229, and Ser271.

It belongs to the IspH family. [4Fe-4S] cluster serves as cofactor.

It carries out the reaction isopentenyl diphosphate + 2 oxidized [2Fe-2S]-[ferredoxin] + H2O = (2E)-4-hydroxy-3-methylbut-2-enyl diphosphate + 2 reduced [2Fe-2S]-[ferredoxin] + 2 H(+). The enzyme catalyses dimethylallyl diphosphate + 2 oxidized [2Fe-2S]-[ferredoxin] + H2O = (2E)-4-hydroxy-3-methylbut-2-enyl diphosphate + 2 reduced [2Fe-2S]-[ferredoxin] + 2 H(+). The protein operates within isoprenoid biosynthesis; dimethylallyl diphosphate biosynthesis; dimethylallyl diphosphate from (2E)-4-hydroxy-3-methylbutenyl diphosphate: step 1/1. It participates in isoprenoid biosynthesis; isopentenyl diphosphate biosynthesis via DXP pathway; isopentenyl diphosphate from 1-deoxy-D-xylulose 5-phosphate: step 6/6. Catalyzes the conversion of 1-hydroxy-2-methyl-2-(E)-butenyl 4-diphosphate (HMBPP) into a mixture of isopentenyl diphosphate (IPP) and dimethylallyl diphosphate (DMAPP). Acts in the terminal step of the DOXP/MEP pathway for isoprenoid precursor biosynthesis. The polypeptide is 4-hydroxy-3-methylbut-2-enyl diphosphate reductase (Vibrio parahaemolyticus serotype O3:K6 (strain RIMD 2210633)).